A 62-amino-acid chain; its full sequence is Toxin Ct28 (62 aa).

An N-terminal signal peptide occupies residues Met1–Ser22. 3 disulfides stabilise this stretch: Cys29–Cys51, Cys35–Cys56, and Cys39–Cys58. An Asparagine amide modification is found at Asn61.

The protein belongs to the short scorpion toxin superfamily. Potassium channel inhibitor family. Alpha-KTx 02 subfamily. Expressed by the venom gland.

It is found in the secreted. Blocks voltage-gated potassium channels. This is Toxin Ct28 from Centruroides tecomanus (Scorpion).